The following is a 346-amino-acid chain: Heparan sulfate glucosamine 3-O-sulfotransferase 5 (346 aa).

Over 1 to 12 the chain is Cytoplasmic; that stretch reads MLFKQQVWLRQK. A helical; Signal-anchor for type II membrane protein transmembrane segment spans residues 13–32; that stretch reads LLVLGSLAVGSLLYLVARVG. At 33–346 the chain is on the lumenal side; sequence SLDRLQPICP…QITGRTLNWP (314 aa). The N-linked (GlcNAc...) asparagine glycan is linked to Asn-75. 100 to 104 lines the 3'-phosphoadenylyl sulfate pocket; that stretch reads KGGTR. Substrate contacts are provided by residues 122–128 and 155–158; these read EIHFFDN and KSPA. A glycan (N-linked (GlcNAc...) asparagine) is linked at Asn-173. 3'-phosphoadenylyl sulfate-binding residues include Arg-183 and Ser-191. An N-linked (GlcNAc...) asparagine glycan is attached at Asn-204. 226 to 227 contacts substrate; the sequence is YK. Residue Asn-287 is glycosylated (N-linked (GlcNAc...) asparagine). Tyr-293 is a binding site for 3'-phosphoadenylyl sulfate. Cys-294 and Cys-304 are joined by a disulfide. 3'-phosphoadenylyl sulfate is bound at residue 309–313; that stretch reads KGRIH.

The protein belongs to the sulfotransferase 1 family.

The protein resides in the golgi apparatus membrane. It catalyses the reaction alpha-D-glucosaminyl-[heparan sulfate](n) + 3'-phosphoadenylyl sulfate = 3-sulfo-alpha-D-glucosaminyl-[heparan sulfate](n) + adenosine 3',5'-bisphosphate + H(+). Its function is as follows. Sulfotransferase that utilizes 3'-phospho-5'-adenylyl sulfate (PAPS) to catalyze the transfer of a sulfo group to position 3 of glucosamine residues in heparan. Catalyzes the rate limiting step in the biosynthesis of heparan sulfate (HSact). This modification is a crucial step in the biosynthesis of anticoagulant heparan sulfate as it completes the structure of the antithrombin pentasaccharide binding site. Also generates GlcUA-GlcNS or IdoUA-GlcNS and IdoUA2S-GlcNH2. The sequence is that of Heparan sulfate glucosamine 3-O-sulfotransferase 5 (Hs3st5) from Mus musculus (Mouse).